The primary structure comprises 140 residues: Profilin-2 (140 aa).

An N-acetylalanine modification is found at Ala2.

The protein belongs to the profilin family. In terms of assembly, occurs in many kinds of cells as a complex with monomeric actin in a 1:1 ratio. Interacts with PFN2. Interacts with ACTMAP (via N-terminus); the interaction may facilitate efficient cleavage of the acetylated N-terminus of immature actin by ACTMAP.

It localises to the cytoplasm. Its subcellular location is the cytoskeleton. Its function is as follows. Binds to actin and affects the structure of the cytoskeleton. At high concentrations, profilin prevents the polymerization of actin, whereas it enhances it at low concentrations. By binding to PIP2, it inhibits the formation of IP3 and DG. The polypeptide is Profilin-2 (Pfn2) (Rattus norvegicus (Rat)).